Reading from the N-terminus, the 223-residue chain is Phosphoribosylformylglycinamidine synthase subunit PurQ (223 aa).

In terms of domain architecture, Glutamine amidotransferase type-1 spans 2 to 223 (KTAIIQLPGL…FQSALELAKG (222 aa)). Cys86 (nucleophile) is an active-site residue. Catalysis depends on residues His196 and Glu198.

As to quaternary structure, part of the FGAM synthase complex composed of 1 PurL, 1 PurQ and 2 PurS subunits.

The protein resides in the cytoplasm. The enzyme catalyses N(2)-formyl-N(1)-(5-phospho-beta-D-ribosyl)glycinamide + L-glutamine + ATP + H2O = 2-formamido-N(1)-(5-O-phospho-beta-D-ribosyl)acetamidine + L-glutamate + ADP + phosphate + H(+). The catalysed reaction is L-glutamine + H2O = L-glutamate + NH4(+). It participates in purine metabolism; IMP biosynthesis via de novo pathway; 5-amino-1-(5-phospho-D-ribosyl)imidazole from N(2)-formyl-N(1)-(5-phospho-D-ribosyl)glycinamide: step 1/2. Its function is as follows. Part of the phosphoribosylformylglycinamidine synthase complex involved in the purines biosynthetic pathway. Catalyzes the ATP-dependent conversion of formylglycinamide ribonucleotide (FGAR) and glutamine to yield formylglycinamidine ribonucleotide (FGAM) and glutamate. The FGAM synthase complex is composed of three subunits. PurQ produces an ammonia molecule by converting glutamine to glutamate. PurL transfers the ammonia molecule to FGAR to form FGAM in an ATP-dependent manner. PurS interacts with PurQ and PurL and is thought to assist in the transfer of the ammonia molecule from PurQ to PurL. This is Phosphoribosylformylglycinamidine synthase subunit PurQ from Bartonella henselae (strain ATCC 49882 / DSM 28221 / CCUG 30454 / Houston 1) (Rochalimaea henselae).